Consider the following 158-residue polypeptide: Transcription elongation factor GreB (158 aa).

This sequence belongs to the GreA/GreB family. GreB subfamily.

Functionally, necessary for efficient RNA polymerase transcription elongation past template-encoded arresting sites. The arresting sites in DNA have the property of trapping a certain fraction of elongating RNA polymerases that pass through, resulting in locked ternary complexes. Cleavage of the nascent transcript by cleavage factors such as GreA or GreB allows the resumption of elongation from the new 3'terminus. GreB releases sequences of up to 9 nucleotides in length. This is Transcription elongation factor GreB from Escherichia coli O157:H7.